A 200-amino-acid polypeptide reads, in one-letter code: Pyridoxal 5'-phosphate synthase subunit PdxT (200 aa).

L-glutamine is bound at residue 46–48 (GES). Cys-78 functions as the Nucleophile in the catalytic mechanism. L-glutamine-binding positions include Arg-107 and 138–139 (IR). Active-site charge relay system residues include His-175 and Glu-177.

This sequence belongs to the glutaminase PdxT/SNO family. In the presence of PdxS, forms a dodecamer of heterodimers. Only shows activity in the heterodimer.

It carries out the reaction aldehydo-D-ribose 5-phosphate + D-glyceraldehyde 3-phosphate + L-glutamine = pyridoxal 5'-phosphate + L-glutamate + phosphate + 3 H2O + H(+). The catalysed reaction is L-glutamine + H2O = L-glutamate + NH4(+). It functions in the pathway cofactor biosynthesis; pyridoxal 5'-phosphate biosynthesis. Functionally, catalyzes the hydrolysis of glutamine to glutamate and ammonia as part of the biosynthesis of pyridoxal 5'-phosphate. The resulting ammonia molecule is channeled to the active site of PdxS. This is Pyridoxal 5'-phosphate synthase subunit PdxT from Corynebacterium glutamicum (strain R).